A 610-amino-acid polypeptide reads, in one-letter code: UvrABC system protein C (610 aa).

The GIY-YIG domain maps to glycine 19–isoleucine 97. One can recognise a UVR domain in the interval glutamate 207–valine 242.

It belongs to the UvrC family. Interacts with UvrB in an incision complex.

It is found in the cytoplasm. Functionally, the UvrABC repair system catalyzes the recognition and processing of DNA lesions. UvrC both incises the 5' and 3' sides of the lesion. The N-terminal half is responsible for the 3' incision and the C-terminal half is responsible for the 5' incision. This chain is UvrABC system protein C, found in Methylococcus capsulatus (strain ATCC 33009 / NCIMB 11132 / Bath).